The sequence spans 361 residues: Ribosomal RNA large subunit methyltransferase M (361 aa).

S-adenosyl-L-methionine-binding positions include S187, 220 to 223 (CPGG), D239, D259, and D276. The active-site Proton acceptor is the K305.

This sequence belongs to the class I-like SAM-binding methyltransferase superfamily. RNA methyltransferase RlmE family. RlmM subfamily. As to quaternary structure, monomer.

It localises to the cytoplasm. The enzyme catalyses cytidine(2498) in 23S rRNA + S-adenosyl-L-methionine = 2'-O-methylcytidine(2498) in 23S rRNA + S-adenosyl-L-homocysteine + H(+). Catalyzes the 2'-O-methylation at nucleotide C2498 in 23S rRNA. This is Ribosomal RNA large subunit methyltransferase M from Shewanella sp. (strain MR-4).